Consider the following 230-residue polypeptide: MGQQISDQTQLVINKLPEKVAKHVTLVRESGSLTYEEFLGRVAELNDVTAKVAAGQEKHLLFEVQPGSDSSAFWKVVVRVVCTKINKSSGIVEASRIMNLYQFIQLYKDITSQAAGVLAQSSTSEEPDENPSSVTSCQASLWMGRVKQLTDEEECCICMDGRADLILPCAHSFCQKCIDKWSDRHRNCPICRLQMTGANESWVVSDAPTEDDMANYILNMADEAGQPHRP.

A lipid anchor (N-myristoyl glycine) is attached at Gly-2. The RING-type zinc finger occupies Cys-155 to Arg-192.

As to expression, isoform 1 is testis-specific. Isoform 2 is expressed in heart, brain, skeletal muscle, kidney, pancreas, lung, liver and testis. Isoform 3 is expressed in heart, liver, and kidney.

The protein localises to the membrane. Functionally, may be involved in spermatogenesis. The sequence is that of RING finger protein 141 (Rnf141) from Mus musculus (Mouse).